Reading from the N-terminus, the 150-residue chain is Heat shock protein beta-3 (150 aa).

A sHSP domain is found at 47–150 (KTRAAQSPPV…VEVKDPVGTK (104 aa)).

Belongs to the small heat shock protein (HSP20) family.

The protein localises to the cytoplasm. Its subcellular location is the nucleus. Inhibitor of actin polymerization. In Homo sapiens (Human), this protein is Heat shock protein beta-3 (HSPB3).